Reading from the N-terminus, the 440-residue chain is Protein CANDIDATE G-PROTEIN COUPLED RECEPTOR 7 (440 aa).

A signal peptide spans 1 to 24; sequence MAKMPLSVVVFLLFSAAFLAVSMA. N-linked (GlcNAc...) asparagine glycosylation is found at Asn-124 and Asn-162. Helical transmembrane passes span 175 to 195, 207 to 227, 243 to 263, 281 to 301, and 315 to 335; these read LPTLYSFFFLCYVAFLGFWSY, IHLLMAGLLLIKSLNLICAAE, ILFYIFQFIRVVLLFTVIILI, VLIIVIPLQVLANIASIVIGE, and VFLLVDIICCCAIIFPIVWSI. Asn-351 carries N-linked (GlcNAc...) asparagine glycosylation. 2 consecutive transmembrane segments (helical) span residues 363–383 and 390–410; these read IVVIGYLYFTRIVVFALKTIA and VSFAAEEIVSLVFYVIMFHMF.

The protein belongs to the LU7TM family.

It localises to the membrane. Functionally, plays a role in plants and microbes interactions. G-protein coupled receptor involved in root growth mediated by the bacterial quorum-sensing signals N-acyl-homoserine lactones (AHLs). This is Protein CANDIDATE G-PROTEIN COUPLED RECEPTOR 7 from Arabidopsis thaliana (Mouse-ear cress).